We begin with the raw amino-acid sequence, 291 residues long: Bifunctional protein FolD (291 aa).

NADP(+)-binding positions include 168–170 (GRG), Thr-195, and Val-236.

It belongs to the tetrahydrofolate dehydrogenase/cyclohydrolase family. In terms of assembly, homodimer.

It catalyses the reaction (6R)-5,10-methylene-5,6,7,8-tetrahydrofolate + NADP(+) = (6R)-5,10-methenyltetrahydrofolate + NADPH. The enzyme catalyses (6R)-5,10-methenyltetrahydrofolate + H2O = (6R)-10-formyltetrahydrofolate + H(+). The protein operates within one-carbon metabolism; tetrahydrofolate interconversion. Functionally, catalyzes the oxidation of 5,10-methylenetetrahydrofolate to 5,10-methenyltetrahydrofolate and then the hydrolysis of 5,10-methenyltetrahydrofolate to 10-formyltetrahydrofolate. In Bifidobacterium adolescentis (strain ATCC 15703 / DSM 20083 / NCTC 11814 / E194a), this protein is Bifunctional protein FolD.